Consider the following 444-residue polypeptide: MQVTTEAVSGVARRLNVSVPTSRINEQFEARLKRTAKTVKINGFRPGKVPANVVRREYGASIYQEVVNDIIRDSVFEAIQQEKINAVGTPNIEKVEHKEDALVFEATVEVYPEVEVKAFDGLEVERKTAEIKDADVDTMIENLQKQRQTWAVTKGMAKKDMQVTFDFEGSIDGEKFEGGSAEDFKLVLGSGRMIPGFEDGIIGMKAGEEKVIDVTFPEDYQAENLAGKAAQFKITVKQVEKPKLPEIDAEFLKIFGVSEEEGIEKLKADVRKNMEREVRNGLRNQVKQAAFDALVAANEIEVPAAMVAQEIDRQRQQMVQQFTQQFGGAGAQSFDKSMLPDELFKEQAERSVKLGVLVSKVLADAKLEVDQARVDAYIDDMASSYEDPTEVIEYFKNDAQQRAQIEAVVLEDQVVDHILASAKVTDKAVSYEDLLKEQQARRMG.

Residues 160 to 245 (DMQVTFDFEG…VKQVEKPKLP (86 aa)) form the PPIase FKBP-type domain.

It belongs to the FKBP-type PPIase family. Tig subfamily.

It is found in the cytoplasm. The catalysed reaction is [protein]-peptidylproline (omega=180) = [protein]-peptidylproline (omega=0). Its function is as follows. Involved in protein export. Acts as a chaperone by maintaining the newly synthesized protein in an open conformation. Functions as a peptidyl-prolyl cis-trans isomerase. This Acinetobacter baumannii (strain SDF) protein is Trigger factor.